Reading from the N-terminus, the 331-residue chain is Fructose-1,6-bisphosphatase class 1 (331 aa).

Positions 80, 98, 100, and 101 each coordinate Mg(2+). Substrate contacts are provided by residues 101-104 (DGSS) and Asn-189. Glu-261 provides a ligand contact to Mg(2+).

The protein belongs to the FBPase class 1 family. Homotetramer. It depends on Mg(2+) as a cofactor.

The protein resides in the cytoplasm. The catalysed reaction is beta-D-fructose 1,6-bisphosphate + H2O = beta-D-fructose 6-phosphate + phosphate. The protein operates within carbohydrate biosynthesis; gluconeogenesis. The sequence is that of Fructose-1,6-bisphosphatase class 1 from Rhodobacter capsulatus (strain ATCC BAA-309 / NBRC 16581 / SB1003).